A 418-amino-acid chain; its full sequence is Centromere protein U (418 aa).

The span at methionine 1–proline 11 shows a compositional bias: basic residues. A disordered region spans residues methionine 1–histidine 76. The short motif at arginine 6–threonine 23 is the Nuclear localization signal element. Basic and acidic residues predominate over residues histidine 12–aspartate 42. Phosphothreonine; by PLK1 is present on threonine 78. The segment at serine 88–isoleucine 227 is disordered. Residue threonine 98 is modified to Phosphothreonine. Serine 108 carries the post-translational modification Phosphoserine. Threonine 110 carries the phosphothreonine modification. Serine 111, serine 116, and serine 120 each carry phosphoserine. Residues serine 124–arginine 133 show a composition bias toward basic residues. Phosphoserine occurs at positions 136, 139, and 141. A compositionally biased stretch (basic and acidic residues) spans serine 145–isoleucine 165. Over residues serine 180–proline 193 the composition is skewed to polar residues. Lysine 185 is covalently cross-linked (Glycyl lysine isopeptide (Lys-Gly) (interchain with G-Cter in SUMO2)). Phosphoserine occurs at positions 190 and 194. Residues threonine 208–serine 224 are compositionally biased toward basic residues. At serine 232 the chain carries Phosphoserine. 2 coiled-coil regions span residues glutamine 297 to tyrosine 356 and leucine 397 to glutamine 417. Residues lysine 303–methionine 320 carry the Nuclear localization signal motif.

It belongs to the CENP-U/AME1 family. As to quaternary structure, component of the CENPA-NAC complex, at least composed of CENPA, CENPC, CENPH, CENPM, CENPN, CENPT and CENPU. The CENPA-NAC complex interacts with the CENPA-CAD complex, composed of CENPI, CENPK, CENPL, CENPO, CENPP, CENPQ, CENPR and CENPS. Interacts with MLF1. Interacts with PLK1. (Microbial infection) Interacts with the N-terminal domain of Kaposi's sarcoma-associated herpesvirus latent nuclear antigen (LNA). Post-translationally, phosphorylated by PLK1 at Thr-78, creating a self-tethering site that specifically interacts with the polo-box domain of PLK1. Expressed at high levels in the testis, fetal liver, thymus, bone marrow and at lower levels in the lymph nodes, placenta, colon and spleen. Present in all cell lines examined, including B-cells, T-cells, epithelial cells and fibroblast cells. Expressed at high levels in glioblastoma cell lines.

The protein resides in the cytoplasm. It localises to the nucleus. The protein localises to the chromosome. Its subcellular location is the centromere. It is found in the kinetochore. Its function is as follows. Component of the CENPA-NAC (nucleosome-associated) complex, a complex that plays a central role in assembly of kinetochore proteins, mitotic progression and chromosome segregation. The CENPA-NAC complex recruits the CENPA-CAD (nucleosome distal) complex and may be involved in incorporation of newly synthesized CENPA into centromeres. Plays an important role in the correct PLK1 localization to the mitotic kinetochores. A scaffold protein responsible for the initial recruitment and maintenance of the kinetochore PLK1 population until its degradation. Involved in transcriptional repression. The chain is Centromere protein U (CENPU) from Homo sapiens (Human).